A 117-amino-acid polypeptide reads, in one-letter code: Immunoglobulin lambda variable 7-46 (117 aa).

The signal sequence occupies residues 1–19 (MAWTPLFLFLLTCCPGSNS). Positions 20–44 (QAVVTQEPSLTVSPGGTVTLTCGSS) are framework-1. The region spanning 20–117 (QAVVTQEPSL…YCLLSYSGAR (98 aa)) is the Ig-like domain. Cysteines 41 and 109 form a disulfide. A complementarity-determining-1 region spans residues 45-53 (TGAVTSGHY). Residues 54–70 (PYWFQQKPGQAPRTLIY) form a framework-2 region. A complementarity-determining-2 region spans residues 71-73 (DTS). The interval 74–109 (NKHSWTPARFSGSLLGGKAALTLLGAQPEDEAEYYC) is framework-3. Residues 110 to 117 (LLSYSGAR) form a complementarity-determining-3 region.

Immunoglobulins are composed of two identical heavy chains and two identical light chains; disulfide-linked.

The protein resides in the secreted. It localises to the cell membrane. In terms of biological role, v region of the variable domain of immunoglobulin light chains that participates in the antigen recognition. Immunoglobulins, also known as antibodies, are membrane-bound or secreted glycoproteins produced by B lymphocytes. In the recognition phase of humoral immunity, the membrane-bound immunoglobulins serve as receptors which, upon binding of a specific antigen, trigger the clonal expansion and differentiation of B lymphocytes into immunoglobulins-secreting plasma cells. Secreted immunoglobulins mediate the effector phase of humoral immunity, which results in the elimination of bound antigens. The antigen binding site is formed by the variable domain of one heavy chain, together with that of its associated light chain. Thus, each immunoglobulin has two antigen binding sites with remarkable affinity for a particular antigen. The variable domains are assembled by a process called V-(D)-J rearrangement and can then be subjected to somatic hypermutations which, after exposure to antigen and selection, allow affinity maturation for a particular antigen. The polypeptide is Immunoglobulin lambda variable 7-46 (Homo sapiens (Human)).